A 159-amino-acid chain; its full sequence is Phosphopantetheine adenylyltransferase (159 aa).

Position 8 (Ser-8) interacts with substrate. Residues 8-9 and His-16 contribute to the ATP site; that span reads SF. Lys-40, Val-72, and Arg-86 together coordinate substrate. ATP contacts are provided by residues 87–89, Glu-97, and 122–128; these read GVR and YAALRSS.

It belongs to the bacterial CoaD family. Homohexamer. Mg(2+) serves as cofactor.

It is found in the cytoplasm. It carries out the reaction (R)-4'-phosphopantetheine + ATP + H(+) = 3'-dephospho-CoA + diphosphate. The protein operates within cofactor biosynthesis; coenzyme A biosynthesis; CoA from (R)-pantothenate: step 4/5. Functionally, reversibly transfers an adenylyl group from ATP to 4'-phosphopantetheine, yielding dephospho-CoA (dPCoA) and pyrophosphate. In Treponema pallidum (strain Nichols), this protein is Phosphopantetheine adenylyltransferase.